Here is a 546-residue protein sequence, read N- to C-terminus: Aladin (546 aa).

The residue at position 2 (C2) is an N-acetylcysteine. The residue at position 33 (S33) is a Phosphoserine. WD repeat units follow at residues 142 to 180 (EFAQ…VYNA), 183 to 222 (TIVP…IWTL), 234 to 274 (GCAQ…VWDV), 280 to 316 (VPLP…VWEA), 324 to 380 (WPTL…IVAD), 386 to 433 (IQTP…LFRT), and 442 to 482 (LPCG…IAHI). 4 positions are modified to phosphoserine: S495, S511, S522, and S525. The disordered stretch occupies residues 500-546 (RAQEPPAGGGGSIHDLPLFTETSPTSAPWDPLPGPPPVLPHSPHSHL). Pro residues predominate over residues 529–539 (DPLPGPPPVLP). S541 is modified (phosphoserine). The Microbody targeting signal motif lies at 544 to 546 (SHL).

Interacts with NDC1, the interaction is required for nuclear pore localization. Interacts with the inactive form aurora kinase AURKA. Interacts with PGRMC2. In terms of tissue distribution, widely expressed. Particularly abundant in cerebellum, corpus callosum, adrenal gland, pituitary gland, gastrointestinal structures and fetal lung.

The protein localises to the nucleus. Its subcellular location is the nuclear pore complex. It is found in the cytoplasm. It localises to the cytoskeleton. The protein resides in the spindle pole. The protein localises to the nucleus envelope. In terms of biological role, plays a role in the normal development of the peripheral and central nervous system. Required for the correct localization of aurora kinase AURKA and the microtubule minus end-binding protein NUMA1 as well as a subset of AURKA targets which ensures proper spindle formation and timely chromosome alignment. The protein is Aladin (AAAS) of Homo sapiens (Human).